A 590-amino-acid chain; its full sequence is Putative ferric-chelate reductase 1 (590 aa).

The helical transmembrane segment at 2–22 (NPLGLFLIYLYTCALTPVSGY) threads the bilayer. The 168-residue stretch at 12 to 179 (YTCALTPVSG…APKIPSSTIP (168 aa)) folds into the Reelin domain. Residues 217 to 330 (ECFFLSFRKD…RSYFIFLADG (114 aa)) form the DOMON domain. Residues 334-533 (DGLLYRHHRQ…VFVDLLLEAH (200 aa)) enclose the Cytochrome b561 domain. The helical transmembrane segment at 371 to 391 (LHGAMMFIAWMTTVSIGVIIA) threads the bilayer. Histidine 372 and histidine 413 together coordinate heme b. The next 2 helical transmembrane spans lie at 416–436 (LMITTVFLTVVAFVLPFIYRG) and 445–465 (HPHLGVTVMILTVLQPVLAVF). Histidine 445 serves as a coordination point for heme b. N-linked (GlcNAc...) asparagine glycosylation occurs at asparagine 478. Histidine 481 serves as a coordination point for heme b. Transmembrane regions (helical) follow at residues 482–502 (WATGTAARIIAVAAMFLGMDL), 517–537 (IGFVLWHVFVDLLLEAHGFCL), and 567–587 (IVMTVYICGNLAFLITFLAAI).

This sequence belongs to the FRRS1 family. Heme b is required as a cofactor.

The protein resides in the membrane. In terms of biological role, putative ferric-chelate reductases reduce Fe(3+) to Fe(2+) before its transport from the endosome to the cytoplasm. The chain is Putative ferric-chelate reductase 1 (frrs1) from Xenopus laevis (African clawed frog).